A 965-amino-acid polypeptide reads, in one-letter code: Valine--tRNA ligase (965 aa).

The disordered stretch occupies residues 1–22 (MENTPSHINKTEPSLDKTYSPQ). The short motif at 56–66 (PNVTGSLHMGH) is the 'HIGH' region element. The 'KMSKS' region motif lies at 568-572 (KMSKS). Lys571 is an ATP binding site. The stretch at 896–965 (LIDKATELDR…IEQQATIAAL (70 aa)) forms a coiled coil.

It belongs to the class-I aminoacyl-tRNA synthetase family. ValS type 1 subfamily. As to quaternary structure, monomer.

The protein localises to the cytoplasm. The catalysed reaction is tRNA(Val) + L-valine + ATP = L-valyl-tRNA(Val) + AMP + diphosphate. In terms of biological role, catalyzes the attachment of valine to tRNA(Val). As ValRS can inadvertently accommodate and process structurally similar amino acids such as threonine, to avoid such errors, it has a 'posttransfer' editing activity that hydrolyzes mischarged Thr-tRNA(Val) in a tRNA-dependent manner. This chain is Valine--tRNA ligase, found in Yersinia pestis.